Consider the following 379-residue polypeptide: Putative nickel insertion protein (379 aa).

It belongs to the LarC family.

The polypeptide is Putative nickel insertion protein (Methanocaldococcus jannaschii (strain ATCC 43067 / DSM 2661 / JAL-1 / JCM 10045 / NBRC 100440) (Methanococcus jannaschii)).